Consider the following 155-residue polypeptide: Large ribosomal subunit protein bL17 (155 aa).

Belongs to the bacterial ribosomal protein bL17 family. Part of the 50S ribosomal subunit. Contacts protein L32.

This chain is Large ribosomal subunit protein bL17, found in Bifidobacterium adolescentis (strain ATCC 15703 / DSM 20083 / NCTC 11814 / E194a).